The chain runs to 577 residues: Calcium-dependent protein kinase 22 (577 aa).

A lipid anchor (N-myristoyl glycine) is attached at G2. Residues Y105–L368 enclose the Protein kinase domain. Residues L111–T119 and K134 each bind ATP. The active-site Proton acceptor is D234. An autoinhibitory domain region spans residues A374–V404. EF-hand domains are found at residues E411 to P446, V447 to M482, S483 to P518, and E520 to W553. Residues D424, D426, S428, N430, D435, D460, D462, N464, T466, E471, D496, D498, N500, E507, D531, D533, D535, R537, and E542 each coordinate Ca(2+).

This sequence belongs to the protein kinase superfamily. Ser/Thr protein kinase family. CDPK subfamily.

Its subcellular location is the membrane. It carries out the reaction L-seryl-[protein] + ATP = O-phospho-L-seryl-[protein] + ADP + H(+). The enzyme catalyses L-threonyl-[protein] + ATP = O-phospho-L-threonyl-[protein] + ADP + H(+). Its activity is regulated as follows. Activated by calcium. Autophosphorylation may play an important role in the regulation of the kinase activity. Functionally, may play a role in signal transduction pathways that involve calcium as a second messenger. This Oryza sativa subsp. japonica (Rice) protein is Calcium-dependent protein kinase 22.